A 705-amino-acid chain; its full sequence is MSKQRIYEYAKELNLKSKEIIDELKSMNIEVSNHMQALEDDQIKALDKKFKKEQKNDNKQSTQNNHQKSNNQNQNKGQQKDNKKNQQQNNKGNKGNKKNNRNNKKNNKNNKPQNQPAAPKEIPSKVTYQEGITVGEFADKLNVESSEIIKKLFLLGIVANINQSLNQETIELIADDYGVEVEEEVVINEEDLSIYFEDEKDDPEAIERPAVVTIMGHVDHGKTTLLDSIRHTKVTAGEAGGITQHIGAYQIENDGKKITFLDTPGHAAFTTMRARGAQVTDITILVVAADDGVMPQTIEAINHAKEAEVPIIVAVNKIDKPTSNPDRVMQELTEYGLIPEDWGGETIFVPLSALSGDGIDDLLEMIGLVAEVQELKANPKNRAVGTVIEAELDKSRGPSASLLVQNGTLNVGDAIVVGNTYGRIRAMVNDLGQRIKMAGPSTPVEITGINDVPQAGDRFVVFSDEKQARRIGESRHEASIVQQRQESKNVSLDNLFEQMKQGEMKDLNVIIKGDVQGSVEALAASLMKIDVEGVNVRIIHTAVGAINESDVTLANASNGIIIGFNVRPDSGAKRAAEAENVDMRLHRVIYNVIEEIESAMKGLLDPEFEEQVIGQAEVRQTFKVSKVGTIAGCYVTEGKITRNAGVRIIRDGIVQYEGELDTLKRFKDDAKEVAKGYECGITIENYNDLKEGDVIEAFEMVEIKR.

The segment at 40–124 (DDQIKALDKK…QPAAPKEIPS (85 aa)) is disordered. The segment covering 41–58 (DQIKALDKKFKKEQKNDN) has biased composition (basic and acidic residues). Low complexity predominate over residues 59–77 (KQSTQNNHQKSNNQNQNKG). Residues 94-108 (KGNKKNNRNNKKNNK) are compositionally biased toward basic residues. Residues 207-376 (ERPAVVTIMG…GLVAEVQELK (170 aa)) form the tr-type G domain. Residues 216–223 (GHVDHGKT) form a G1 region. 216-223 (GHVDHGKT) serves as a coordination point for GTP. The tract at residues 241–245 (GITQH) is G2. The interval 262–265 (DTPG) is G3. GTP is bound by residues 262 to 266 (DTPGH) and 316 to 319 (NKID). The G4 stretch occupies residues 316 to 319 (NKID). Residues 352-354 (SAL) are G5.

It belongs to the TRAFAC class translation factor GTPase superfamily. Classic translation factor GTPase family. IF-2 subfamily.

It is found in the cytoplasm. Functionally, one of the essential components for the initiation of protein synthesis. Protects formylmethionyl-tRNA from spontaneous hydrolysis and promotes its binding to the 30S ribosomal subunits. Also involved in the hydrolysis of GTP during the formation of the 70S ribosomal complex. The sequence is that of Translation initiation factor IF-2 from Staphylococcus aureus (strain MSSA476).